The chain runs to 681 residues: DNA-directed RNA polymerase subunit beta' (681 aa).

4 residues coordinate Zn(2+): Cys69, Cys71, Cys87, and Cys90. Positions 489, 491, and 493 each coordinate Mg(2+).

This sequence belongs to the RNA polymerase beta' chain family. RpoC1 subfamily. In terms of assembly, in plastids the minimal PEP RNA polymerase catalytic core is composed of four subunits: alpha, beta, beta', and beta''. When a (nuclear-encoded) sigma factor is associated with the core the holoenzyme is formed, which can initiate transcription. Requires Mg(2+) as cofactor. It depends on Zn(2+) as a cofactor.

Its subcellular location is the plastid. The protein localises to the chloroplast. It carries out the reaction RNA(n) + a ribonucleoside 5'-triphosphate = RNA(n+1) + diphosphate. Functionally, DNA-dependent RNA polymerase catalyzes the transcription of DNA into RNA using the four ribonucleoside triphosphates as substrates. This chain is DNA-directed RNA polymerase subunit beta', found in Atropa belladonna (Belladonna).